Here is a 350-residue protein sequence, read N- to C-terminus: Succinylglutamate desuccinylase (350 aa).

Zn(2+)-binding residues include H71, E74, and H169. E233 is an active-site residue.

The protein belongs to the AspA/AstE family. Succinylglutamate desuccinylase subfamily. The cofactor is Zn(2+).

The enzyme catalyses N-succinyl-L-glutamate + H2O = L-glutamate + succinate. It participates in amino-acid degradation; L-arginine degradation via AST pathway; L-glutamate and succinate from L-arginine: step 5/5. Functionally, transforms N(2)-succinylglutamate into succinate and glutamate. The sequence is that of Succinylglutamate desuccinylase from Pseudoalteromonas atlantica (strain T6c / ATCC BAA-1087).